A 555-amino-acid chain; its full sequence is Potassium-transporting ATPase potassium-binding subunit (555 aa).

The next 10 membrane-spanning stretches (helical) occupy residues 2 to 22, 60 to 80, 130 to 150, 173 to 193, 246 to 266, 278 to 298, 374 to 394, 412 to 432, 483 to 503, and 525 to 545; these read IWVA…PTGI, QYAL…YFIF, IGIT…VMAF, VFLP…VPQT, MSNI…PFTY, ILFV…TTSE, AGFV…GLMV, LIAV…ALAL, LVMF…AASL, and GIFI…MLVL.

Belongs to the KdpA family. The system is composed of three essential subunits: KdpA, KdpB and KdpC.

The protein localises to the cell membrane. Its function is as follows. Part of the high-affinity ATP-driven potassium transport (or Kdp) system, which catalyzes the hydrolysis of ATP coupled with the electrogenic transport of potassium into the cytoplasm. This subunit binds the extracellular potassium ions and delivers the ions to the membrane domain of KdpB through an intramembrane tunnel. This chain is Potassium-transporting ATPase potassium-binding subunit, found in Bacillus cereus (strain 03BB102).